The chain runs to 201 residues: Dynactin subunit 6 (201 aa).

Belongs to the dynactin subunits 5/6 family. Dynactin subunit 6 subfamily. In terms of assembly, member of the pointed-end complex of the dynactin shoulder complex which contains dctn4, dctn5 and dctn6 subunits and Actr10. Within the complex dctn6 forms a heterodimer with dctn5. Interacts with plk1.

It localises to the cytoplasm. It is found in the cytoskeleton. The protein resides in the chromosome. Its subcellular location is the centromere. The protein localises to the kinetochore. Functionally, part of the dynactin complex that activates the molecular motor dynein for ultra-processive transport along microtubules. This Xenopus tropicalis (Western clawed frog) protein is Dynactin subunit 6 (dctn6).